The primary structure comprises 579 residues: DNA ligase 1 (579 aa).

Glu244 lines the ATP pocket. The active-site N6-AMP-lysine intermediate is the Lys246. ATP is bound by residues Arg251, Arg266, Glu296, Phe342, Arg419, and Lys425.

Belongs to the ATP-dependent DNA ligase family. Mg(2+) is required as a cofactor.

It carries out the reaction ATP + (deoxyribonucleotide)n-3'-hydroxyl + 5'-phospho-(deoxyribonucleotide)m = (deoxyribonucleotide)n+m + AMP + diphosphate.. In terms of biological role, DNA ligase that seals nicks in double-stranded DNA during DNA replication, DNA recombination and DNA repair. The polypeptide is DNA ligase 1 (Methanosarcina mazei (strain ATCC BAA-159 / DSM 3647 / Goe1 / Go1 / JCM 11833 / OCM 88) (Methanosarcina frisia)).